The following is a 577-amino-acid chain: Moesin (577 aa).

In terms of domain architecture, FERM spans 2–295 (PKTISVRVTT…GNHELYMRRR (294 aa)). Residue Ser74 is modified to Phosphoserine. At Lys79 the chain carries N6-acetyllysine. Lys83 carries the post-translational modification N6-succinyllysine. The [IL]-x-C-x-x-[DE] motif motif lies at 115 to 120 (IYCPPE). Tyr116 carries the post-translational modification Phosphotyrosine. At Cys117 the chain carries S-nitrosocysteine. 2 positions are modified to N6-acetyllysine: Lys139 and Lys165. Disordered stretches follow at residues 322–342 (LLEN…KIER), 358–453 (TKKA…QMVQ), and 468–549 (STPH…AENM). The segment covering 358 to 401 (TKKAQQELEEQTRRALELEQERKRAQSEAEKLAKERQEAEEAKE) has biased composition (basic and acidic residues). A Phosphoserine modification is found at Ser407. Composition is skewed to basic and acidic residues over residues 438-447 (KESEAEECHQ) and 492-519 (AELR…ERVQ). The residue at position 527 (Ser527) is a Phosphoserine. The segment covering 531 to 549 (NARDESKKTTNDMIHAENM) has biased composition (basic and acidic residues). Phosphothreonine; by ROCK2 and STK10 is present on Thr558.

As to quaternary structure, in resting T-cells, part of a PAG1-NHERF1-MSN complex which is disrupted upon TCR activation. Interacts with NHERF1. Interacts with PPP1R16B. Interacts with PDZD8. Interacts with SELPLG and SYK; these interactions mediate the activation of SYK by SELPLG. Interacts with PDPN (via cytoplasmic domain); this interaction activates RHOA and promotes epithelial-mesenchymal transition. Interacts with SPN/CD43 cytoplasmic tail. Interacts with CD44. Interacts with ICAM2. Interacts with ICAM3 (via C-terminus). Interacts with PDZD8. Interacts with F-actin. Interacts with CD46. Interacts with PTPN6. In terms of processing, phosphorylation on Thr-558 is crucial for the formation of microvilli-like structures. Phosphorylation by ROCK2 suppresses the head-to-tail association of the N-terminal and C-terminal halves resulting in an opened conformation which is capable of actin and membrane-binding. Phosphorylation on Thr-558 by STK10 negatively regulates lymphocyte migration and polarization. S-nitrosylation of Cys-117 is induced by interferon-gamma and oxidatively-modified low-densitity lipoprotein (LDL(ox)) implicating the iNOS-S100A8/9 transnitrosylase complex.

The protein resides in the cell membrane. The protein localises to the cytoplasm. It is found in the cytoskeleton. It localises to the apical cell membrane. Its subcellular location is the cell projection. The protein resides in the microvillus membrane. The protein localises to the microvillus. With respect to regulation, a head-to-tail association, of the N-terminal and C-terminal halves results in a closed conformation (inactive form) which is incapable of actin or membrane-binding. Its function is as follows. Ezrin-radixin-moesin (ERM) family protein that connects the actin cytoskeleton to the plasma membrane and thereby regulates the structure and function of specific domains of the cell cortex. Tethers actin filaments by oscillating between a resting and an activated state providing transient interactions between moesin and the actin cytoskeleton. Once phosphorylated on its C-terminal threonine, moesin is activated leading to interaction with F-actin and cytoskeletal rearrangement. These rearrangements regulate many cellular processes, including cell shape determination, membrane transport, and signal transduction. The role of moesin is particularly important in immunity acting on both T and B-cells homeostasis and self-tolerance, regulating lymphocyte egress from lymphoid organs. Modulates phagolysosomal biogenesis in macrophages. Participates also in immunologic synapse formation. The chain is Moesin from Rattus norvegicus (Rat).